A 298-amino-acid chain; its full sequence is Inosose dehydratase (298 aa).

It belongs to the IolE/MocC family. Glutathione is required as a cofactor. Co(2+) serves as cofactor. Requires Mn(2+) as cofactor.

The catalysed reaction is scyllo-inosose = 3D-3,5/4-trihydroxycyclohexane-1,2-dione + H2O. Its function is as follows. Catalyzes the dehydration of inosose (2-keto-myo-inositol, 2KMI or 2,4,6/3,5-pentahydroxycyclohexanone) to 3D-(3,5/4)-trihydroxycyclohexane-1,2-dione (D-2,3-diketo-4-deoxy-epi-inositol). This chain is Inosose dehydratase, found in Glaesserella parasuis serovar 5 (strain SH0165) (Haemophilus parasuis).